The chain runs to 293 residues: Heterogeneous nuclear ribonucleoprotein C-like 4 (293 aa).

An RRM domain is found at 16 to 87 (SRVFIGNLNT…QVVDINLAAE (72 aa)). Disordered regions lie at residues 140–177 (VVPS…KLKG) and 208–293 (HCKQ…QDDS). Positions 177 to 208 (GDDLQAIKQELTQIKQKVDSLLENLEKIEKEH) form a coiled coil. Basic and acidic residues-rich tracts occupy residues 208 to 222 (HCKQ…KSEE) and 229 to 240 (SKKDKTHVKMES). The span at 242-263 (GGADDSVEEGDLLCDDDNEDQG) shows a compositional bias: acidic residues. Over residues 269–293 (LIKDDEKGAEEGEDDRDRANGQDDS) the composition is skewed to basic and acidic residues.

The protein belongs to the RRM HNRPC family. RALY subfamily.

Its subcellular location is the nucleus. In Homo sapiens (Human), this protein is Heterogeneous nuclear ribonucleoprotein C-like 4.